We begin with the raw amino-acid sequence, 68 residues long: Guanine nucleotide-binding protein G(I)/G(S)/G(O) subunit gamma-5 (68 aa).

Residue serine 2 is modified to N-acetylserine. Residue serine 2 is modified to Phosphoserine. Cysteine 65 carries the cysteine methyl ester modification. Residue cysteine 65 is the site of S-geranylgeranyl cysteine attachment. A propeptide spans 66–68 (SFL) (removed in mature form).

The protein belongs to the G protein gamma family. As to quaternary structure, g proteins are composed of 3 units, alpha, beta and gamma. Expressed in a variety of tissues.

Its subcellular location is the cell membrane. Its function is as follows. Guanine nucleotide-binding proteins (G proteins) are involved as a modulator or transducer in various transmembrane signaling systems. The beta and gamma chains are required for the GTPase activity, for replacement of GDP by GTP, and for G protein-effector interaction. This Bos taurus (Bovine) protein is Guanine nucleotide-binding protein G(I)/G(S)/G(O) subunit gamma-5 (GNG5).